A 151-amino-acid chain; its full sequence is Ribosome maturation factor RimP (151 aa).

It belongs to the RimP family.

The protein resides in the cytoplasm. Its function is as follows. Required for maturation of 30S ribosomal subunits. The protein is Ribosome maturation factor RimP of Shewanella amazonensis (strain ATCC BAA-1098 / SB2B).